A 297-amino-acid chain; its full sequence is ER membrane protein complex subunit 2 (297 aa).

Residue Ala2 is modified to N-acetylalanine. TPR repeat units follow at residues 87–120, 155–188, and 192–225; these read HRVKRLTGMRFEAMERYDDAIQLYDRILQEDPTN, QEAWHELAELYINEHDYAKAAFCLEELMMTNPHN, and CQQYAEVKYTQGGLENLELSRKYFAQALKLNNRN. Lys255 carries the N6-acetyllysine modification.

This sequence belongs to the EMC2 family. In terms of assembly, component of the ER membrane protein complex (EMC). Interacts with WNK1 (via amphipathic alpha-helix region); promoting the ER membrane protein complex assembly by preventing EMC2 ubiquitination. In terms of processing, ubiquitinated when soluble in the cytoplasm, leading to its degradation by the proteasome. Interaction with EMC2 prevents its ubiquitination and degradation.

Its subcellular location is the endoplasmic reticulum membrane. Its function is as follows. Part of the endoplasmic reticulum membrane protein complex (EMC) that enables the energy-independent insertion into endoplasmic reticulum membranes of newly synthesized membrane proteins. Preferentially accommodates proteins with transmembrane domains that are weakly hydrophobic or contain destabilizing features such as charged and aromatic residues. Involved in the cotranslational insertion of multi-pass membrane proteins in which stop-transfer membrane-anchor sequences become ER membrane spanning helices. It is also required for the post-translational insertion of tail-anchored/TA proteins in endoplasmic reticulum membranes. By mediating the proper cotranslational insertion of N-terminal transmembrane domains in an N-exo topology, with translocated N-terminus in the lumen of the ER, controls the topology of multi-pass membrane proteins like the G protein-coupled receptors. By regulating the insertion of various proteins in membranes, it is indirectly involved in many cellular processes. The polypeptide is ER membrane protein complex subunit 2 (Homo sapiens (Human)).